Consider the following 249-residue polypeptide: 2,3-bisphosphoglycerate-dependent phosphoglycerate mutase (249 aa).

Residues 8-15 (RHGESAWN), 21-22 (TG), Arg-60, 87-90 (ERHY), Lys-98, 114-115 (RR), and 183-184 (GN) contribute to the substrate site. The active-site Tele-phosphohistidine intermediate is His-9. Catalysis depends on Glu-87, which acts as the Proton donor/acceptor.

The protein belongs to the phosphoglycerate mutase family. BPG-dependent PGAM subfamily.

It catalyses the reaction (2R)-2-phosphoglycerate = (2R)-3-phosphoglycerate. The protein operates within carbohydrate degradation; glycolysis; pyruvate from D-glyceraldehyde 3-phosphate: step 3/5. Catalyzes the interconversion of 2-phosphoglycerate and 3-phosphoglycerate. The protein is 2,3-bisphosphoglycerate-dependent phosphoglycerate mutase of Methanosphaerula palustris (strain ATCC BAA-1556 / DSM 19958 / E1-9c).